The sequence spans 248 residues: 14-3-3-like protein 1 (248 aa).

It belongs to the 14-3-3 family. In terms of assembly, interacts with daf-16 and sir-2.1. Interacts with atgl-1. Interacts with hcf-1.

The protein localises to the cytoplasm. It is found in the nucleus. Required to modulate lifespan, in concert with hcf-1, acting redundantly with 14-3-3-like protein ftt-2. The chain is 14-3-3-like protein 1 (par-5) from Caenorhabditis elegans.